Reading from the N-terminus, the 210-residue chain is Regulatory protein RecX (210 aa).

The interval 28–47 (SRRQEEGAASSLFDREAEEK) is disordered.

Belongs to the RecX family.

Its subcellular location is the cytoplasm. Modulates RecA activity. The protein is Regulatory protein RecX of Corynebacterium efficiens (strain DSM 44549 / YS-314 / AJ 12310 / JCM 11189 / NBRC 100395).